Consider the following 191-residue polypeptide: MENNKNQWLEIGTIVSARGLKGELKVLSSTDFPERFEIPGKRWLQPPHDPYPQAIELISGKSVAGKNIYIVRLEGIENRNQAETLRGYKLLIMDQELPELEEEEYHVSQLINVQVYHHKTGELLGTVIDLFTTGHDLLEIQLINNSEREAKKTKERKVLIPFVYEIVPVVDLENNRIEINPPKGLLSLGDS.

The PRC barrel domain occupies Glu102–Leu185.

Belongs to the RimM family. In terms of assembly, binds ribosomal protein uS19.

The protein resides in the cytoplasm. Its function is as follows. An accessory protein needed during the final step in the assembly of 30S ribosomal subunit, possibly for assembly of the head region. Essential for efficient processing of 16S rRNA. May be needed both before and after RbfA during the maturation of 16S rRNA. It has affinity for free ribosomal 30S subunits but not for 70S ribosomes. The chain is Ribosome maturation factor RimM from Crocosphaera subtropica (strain ATCC 51142 / BH68) (Cyanothece sp. (strain ATCC 51142)).